The chain runs to 395 residues: Elongation factor Tu (395 aa).

Residues 10–204 enclose the tr-type G domain; it reads KPHVNIGTIG…TVDSYIPEPA (195 aa). The G1 stretch occupies residues 19 to 26; the sequence is GHVDHGKT. GTP is bound at residue 19–26; that stretch reads GHVDHGKT. Mg(2+) is bound at residue Thr26. The tract at residues 60–64 is G2; that stretch reads GITIN. Residues 81–84 form a G3 region; that stretch reads DAPG. GTP is bound by residues 81 to 85 and 136 to 139; these read DAPGH and NKTD. The tract at residues 136–139 is G4; that stretch reads NKTD. Residues 174–176 form a G5 region; the sequence is SAL.

It belongs to the TRAFAC class translation factor GTPase superfamily. Classic translation factor GTPase family. EF-Tu/EF-1A subfamily. Monomer.

It localises to the cytoplasm. The catalysed reaction is GTP + H2O = GDP + phosphate + H(+). GTP hydrolase that promotes the GTP-dependent binding of aminoacyl-tRNA to the A-site of ribosomes during protein biosynthesis. The chain is Elongation factor Tu from Leuconostoc mesenteroides subsp. mesenteroides (strain ATCC 8293 / DSM 20343 / BCRC 11652 / CCM 1803 / JCM 6124 / NCDO 523 / NBRC 100496 / NCIMB 8023 / NCTC 12954 / NRRL B-1118 / 37Y).